A 143-amino-acid chain; its full sequence is MFMGEYQHTLDDKSRLIIPAKFRNQLGDTFVVTRWMEHSLFAFPKDEWDKFEEKLNKLPFGAKDARAFRRFVLAGAIESDFDKQGRIIIPTVLKEHAQLNKNVVITGSGNGFEIWSKDNWEEYTAGTAENFDQIAEELTDFDL.

2 SpoVT-AbrB domains span residues glutamate 5 to glutamate 47 and alanine 76 to asparagine 119.

This sequence belongs to the MraZ family. As to quaternary structure, forms oligomers.

The protein localises to the cytoplasm. The protein resides in the nucleoid. The polypeptide is Transcriptional regulator MraZ (Oenococcus oeni (strain ATCC BAA-331 / PSU-1)).